Reading from the N-terminus, the 1048-residue chain is uncharacterized protein (1048 aa).

The tract at residues 601-629 is disordered; sequence ENQINEEQQTNVENEQQTEQQFENEDKET. The span at 605-621 shows a compositional bias: low complexity; the sequence is NEEQQTNVENEQQTEQQ.

This is an uncharacterized protein from Methanocaldococcus jannaschii (strain ATCC 43067 / DSM 2661 / JAL-1 / JCM 10045 / NBRC 100440) (Methanococcus jannaschii).